A 343-amino-acid polypeptide reads, in one-letter code: Anthranilate phosphoribosyltransferase (343 aa).

5-phospho-alpha-D-ribose 1-diphosphate is bound by residues Gly86, 89–90, Thr94, 96–99, 114–122, and Ser126; these read GD, NIST, and KHGNKSASG. Gly86 is a binding site for anthranilate. Ser98 is a binding site for Mg(2+). Asn117 is an anthranilate binding site. Arg172 provides a ligand contact to anthranilate. Residues Asp231 and Glu232 each coordinate Mg(2+).

Belongs to the anthranilate phosphoribosyltransferase family. As to quaternary structure, homodimer. The cofactor is Mg(2+).

It carries out the reaction N-(5-phospho-beta-D-ribosyl)anthranilate + diphosphate = 5-phospho-alpha-D-ribose 1-diphosphate + anthranilate. The protein operates within amino-acid biosynthesis; L-tryptophan biosynthesis; L-tryptophan from chorismate: step 2/5. Its function is as follows. Catalyzes the transfer of the phosphoribosyl group of 5-phosphorylribose-1-pyrophosphate (PRPP) to anthranilate to yield N-(5'-phosphoribosyl)-anthranilate (PRA). In Prochlorococcus marinus subsp. pastoris (strain CCMP1986 / NIES-2087 / MED4), this protein is Anthranilate phosphoribosyltransferase.